Reading from the N-terminus, the 232-residue chain is Small ribosomal subunit protein uS3 (232 aa).

The region spanning 39–107 (IRAILHKELK…DVVINIVEIR (69 aa)) is the KH type-2 domain.

Belongs to the universal ribosomal protein uS3 family. As to quaternary structure, part of the 30S ribosomal subunit. Forms a tight complex with proteins S10 and S14.

Binds the lower part of the 30S subunit head. Binds mRNA in the 70S ribosome, positioning it for translation. The sequence is that of Small ribosomal subunit protein uS3 from Rhodopseudomonas palustris (strain BisA53).